The chain runs to 251 residues: Triosephosphate isomerase (251 aa).

A substrate-binding site is contributed by 9–11; that stretch reads NWK. Histidine 94 acts as the Electrophile in catalysis. The active-site Proton acceptor is glutamate 163. Substrate contacts are provided by residues glycine 169, serine 209, and 230 to 231; that span reads GG.

The protein belongs to the triosephosphate isomerase family. In terms of assembly, homodimer.

Its subcellular location is the cytoplasm. The catalysed reaction is D-glyceraldehyde 3-phosphate = dihydroxyacetone phosphate. It functions in the pathway carbohydrate biosynthesis; gluconeogenesis. Its pathway is carbohydrate degradation; glycolysis; D-glyceraldehyde 3-phosphate from glycerone phosphate: step 1/1. Involved in the gluconeogenesis. Catalyzes stereospecifically the conversion of dihydroxyacetone phosphate (DHAP) to D-glyceraldehyde-3-phosphate (G3P). This Dehalococcoides mccartyi (strain ATCC BAA-2266 / KCTC 15142 / 195) (Dehalococcoides ethenogenes (strain 195)) protein is Triosephosphate isomerase.